A 120-amino-acid polypeptide reads, in one-letter code: NAD(P)H-quinone oxidoreductase subunit 3, chloroplastic (120 aa).

Helical transmembrane passes span 2 to 22, 64 to 84, and 88 to 108; these read FLLY…VIPI, MFAL…PWAL, and ILGV…VLGL.

The protein belongs to the complex I subunit 3 family. In terms of assembly, NDH is composed of at least 16 different subunits, 5 of which are encoded in the nucleus.

Its subcellular location is the plastid. The protein localises to the chloroplast thylakoid membrane. The enzyme catalyses a plastoquinone + NADH + (n+1) H(+)(in) = a plastoquinol + NAD(+) + n H(+)(out). The catalysed reaction is a plastoquinone + NADPH + (n+1) H(+)(in) = a plastoquinol + NADP(+) + n H(+)(out). In terms of biological role, NDH shuttles electrons from NAD(P)H:plastoquinone, via FMN and iron-sulfur (Fe-S) centers, to quinones in the photosynthetic chain and possibly in a chloroplast respiratory chain. The immediate electron acceptor for the enzyme in this species is believed to be plastoquinone. Couples the redox reaction to proton translocation, and thus conserves the redox energy in a proton gradient. The sequence is that of NAD(P)H-quinone oxidoreductase subunit 3, chloroplastic from Oenothera argillicola (Appalachian evening primrose).